Consider the following 186-residue polypeptide: Large ribosomal subunit protein uL5 (186 aa).

This sequence belongs to the universal ribosomal protein uL5 family. Part of the 50S ribosomal subunit; contacts the 5S rRNA and probably tRNA. Forms a bridge to the 30S subunit in the 70S ribosome.

Functionally, this is one of the proteins that bind and probably mediate the attachment of the 5S RNA into the large ribosomal subunit, where it forms part of the central protuberance. In the 70S ribosome it contacts protein S13 of the 30S subunit (bridge B1b), connecting the 2 subunits; this bridge is implicated in subunit movement. May contact the P site tRNA; the 5S rRNA and some of its associated proteins might help stabilize positioning of ribosome-bound tRNAs. This chain is Large ribosomal subunit protein uL5, found in Pyrococcus furiosus (strain ATCC 43587 / DSM 3638 / JCM 8422 / Vc1).